We begin with the raw amino-acid sequence, 470 residues long: Argininosuccinate lyase (470 aa).

It belongs to the lyase 1 family. Argininosuccinate lyase subfamily.

It localises to the cytoplasm. The catalysed reaction is 2-(N(omega)-L-arginino)succinate = fumarate + L-arginine. The protein operates within amino-acid biosynthesis; L-arginine biosynthesis; L-arginine from L-ornithine and carbamoyl phosphate: step 3/3. The chain is Argininosuccinate lyase from Ehrlichia chaffeensis (strain ATCC CRL-10679 / Arkansas).